We begin with the raw amino-acid sequence, 473 residues long: Ribulose bisphosphate carboxylase large chain (473 aa).

Positions Met1–Ser2 are excised as a propeptide. N-acetylproline is present on Pro3. At Lys14 the chain carries N6,N6,N6-trimethyllysine. Substrate is bound by residues Asn123 and Thr173. Residue Lys175 is the Proton acceptor of the active site. Lys177 contacts substrate. Residues Lys201, Asp203, and Glu204 each contribute to the Mg(2+) site. At Lys201 the chain carries N6-carboxylysine. The active-site Proton acceptor is His294. Substrate contacts are provided by Arg295, His327, and Ser379.

It belongs to the RuBisCO large chain family. Type I subfamily. Heterohexadecamer of 8 large chains and 8 small chains; disulfide-linked. The disulfide link is formed within the large subunit homodimers. Requires Mg(2+) as cofactor. In terms of processing, the disulfide bond which can form in the large chain dimeric partners within the hexadecamer appears to be associated with oxidative stress and protein turnover.

It is found in the plastid. The protein resides in the chloroplast. The catalysed reaction is 2 (2R)-3-phosphoglycerate + 2 H(+) = D-ribulose 1,5-bisphosphate + CO2 + H2O. The enzyme catalyses D-ribulose 1,5-bisphosphate + O2 = 2-phosphoglycolate + (2R)-3-phosphoglycerate + 2 H(+). RuBisCO catalyzes two reactions: the carboxylation of D-ribulose 1,5-bisphosphate, the primary event in carbon dioxide fixation, as well as the oxidative fragmentation of the pentose substrate in the photorespiration process. Both reactions occur simultaneously and in competition at the same active site. This chain is Ribulose bisphosphate carboxylase large chain, found in Cajanus cajan (Pigeon pea).